A 286-amino-acid polypeptide reads, in one-letter code: NADH-cytochrome b5 reductase 1 (286 aa).

The helical transmembrane segment at Phe6 to Leu26 threads the bilayer. Residues Gln52–Gln155 enclose the FAD-binding FR-type domain. FAD contacts are provided by residues Asp135 to Gly150 and Ser161 to Leu193.

Belongs to the flavoprotein pyridine nucleotide cytochrome reductase family. Monomer. It depends on FAD as a cofactor.

The protein localises to the endoplasmic reticulum membrane. It is found in the mitochondrion outer membrane. The enzyme catalyses 2 Fe(III)-[cytochrome b5] + NADH = 2 Fe(II)-[cytochrome b5] + NAD(+) + H(+). Its function is as follows. Electron donor reductase for cytochrome b5. The cytochrome b5/NADH cytochrome b5 reductase electron transfer system supports the catalytic activity of several sterol biosynthetic enzymes. This Dictyostelium discoideum (Social amoeba) protein is NADH-cytochrome b5 reductase 1 (cyb5r1).